The following is a 273-amino-acid chain: Large ribosomal subunit protein uL2cz/uL2cy (273 aa).

2 disordered regions span residues 1 to 23 and 224 to 273; these read MAIHLYKTSTSSTRNGAVDSQVK and NPVD…RRRK. A compositionally biased stretch (basic and acidic residues) spans 262 to 273; sequence KYSDRFILRRRK.

Belongs to the universal ribosomal protein uL2 family. Part of the 50S ribosomal subunit.

It is found in the plastid. The protein localises to the chloroplast. The polypeptide is Large ribosomal subunit protein uL2cz/uL2cy (rpl2-A) (Acorus calamus var. americanus (American sweet flag)).